A 303-amino-acid chain; its full sequence is Movement protein (303 aa).

A compositionally biased stretch (polar residues) spans 1–18; sequence MSNIVSPFSGSSRTTSDV. 2 disordered regions span residues 1-24 and 267-303; these read MSNI…QAGG and EESE…LRIK.

Belongs to the bromovirus movement protein family. Post-translationally, phosphorylated by host.

The protein resides in the host cell junction. Its subcellular location is the host plasmodesma. In terms of biological role, transports viral genome to neighboring plant cells directly through plasmosdesmata, without any budding. The movement protein allows efficient cell to cell propagation, by bypassing the host cell wall barrier. Acts by forming a tubular structure at the host plasmodesmata, enlarging it enough to allow free passage of virion capsids. This is Movement protein from Brome mosaic virus (BMV).